The following is a 291-amino-acid chain: ATP synthase gamma chain (291 aa).

It belongs to the ATPase gamma chain family. In terms of assembly, F-type ATPases have 2 components, CF(1) - the catalytic core - and CF(0) - the membrane proton channel. CF(1) has five subunits: alpha(3), beta(3), gamma(1), delta(1), epsilon(1). CF(0) has three main subunits: a, b and c.

The protein localises to the cell inner membrane. Produces ATP from ADP in the presence of a proton gradient across the membrane. The gamma chain is believed to be important in regulating ATPase activity and the flow of protons through the CF(0) complex. The protein is ATP synthase gamma chain of Neisseria gonorrhoeae (strain ATCC 700825 / FA 1090).